The chain runs to 447 residues: Tubulin beta-1 chain (447 aa).

8 residues coordinate GTP: Gln11, Glu69, Ser138, Gly142, Thr143, Gly144, Asn204, and Asn226. Residue Glu69 coordinates Mg(2+).

The protein belongs to the tubulin family. As to quaternary structure, dimer of alpha and beta chains. A typical microtubule is a hollow water-filled tube with an outer diameter of 25 nm and an inner diameter of 15 nM. Alpha-beta heterodimers associate head-to-tail to form protofilaments running lengthwise along the microtubule wall with the beta-tubulin subunit facing the microtubule plus end conferring a structural polarity. Microtubules usually have 13 protofilaments but different protofilament numbers can be found in some organisms and specialized cells. The cofactor is Mg(2+).

The protein resides in the cytoplasm. The protein localises to the cytoskeleton. Functionally, tubulin is the major constituent of microtubules, a cylinder consisting of laterally associated linear protofilaments composed of alpha- and beta-tubulin heterodimers. Microtubules grow by the addition of GTP-tubulin dimers to the microtubule end, where a stabilizing cap forms. Below the cap, tubulin dimers are in GDP-bound state, owing to GTPase activity of alpha-tubulin. The sequence is that of Tubulin beta-1 chain from Geotrichum candidum (Oospora lactis).